The sequence spans 198 residues: Inosine triphosphate pyrophosphatase (198 aa).

N-acetylalanine is present on alanine 2. An ITP-binding site is contributed by 14–19 (TGNAKK). Glutamate 44 is a Mg(2+) binding site. Residues lysine 56, 72–73 (DT), and lysine 89 each bind ITP. At serine 146 the chain carries Phosphoserine. ITP contacts are provided by residues 149 to 152 (FGWD), lysine 172, and 177 to 178 (HR).

Belongs to the HAM1 NTPase family. In terms of assembly, homodimer. Requires Mg(2+) as cofactor. Mn(2+) is required as a cofactor.

It is found in the cytoplasm. It carries out the reaction ITP + H2O = IMP + diphosphate + H(+). It catalyses the reaction dITP + H2O = dIMP + diphosphate + H(+). The enzyme catalyses XTP + H2O = XMP + diphosphate + H(+). The catalysed reaction is N(6)-hydroxy-dATP + H2O = N(6)-hydroxy-dAMP + diphosphate + H(+). In terms of biological role, pyrophosphatase that hydrolyzes the non-canonical purine nucleotides inosine triphosphate (ITP), deoxyinosine triphosphate (dITP) as well as 2'-deoxy-N-6-hydroxylaminopurine triphosphate (dHAPTP) and xanthosine 5'-triphosphate (XTP) to their respective monophosphate derivatives. The enzyme does not distinguish between the deoxy- and ribose forms. Probably excludes non-canonical purines from RNA and DNA precursor pools, thus preventing their incorporation into RNA and DNA and avoiding chromosomal lesions. The polypeptide is Inosine triphosphate pyrophosphatase (Itpa) (Rattus norvegicus (Rat)).